We begin with the raw amino-acid sequence, 396 residues long: Period circadian protein (396 aa).

Disordered regions lie at residues 27–120 (VTAP…APPV), 164–188 (LEYS…WEGE), 253–273 (GGNG…TNQY), and 333–362 (SPSS…TSQA). Residues 93–114 (GTSGTGNSGDGGGGGGANGTGS) are compositionally biased toward gly residues. Positions 253–262 (GGNGNVGSGN) are enriched in gly residues. Residues 333–342 (SPSSTNTNPN) show a composition bias toward low complexity.

Forms a heterodimer with timeless (TIM); the complex then translocates into the nucleus. In terms of processing, phosphorylated with a circadian rhythmicity, probably by the double-time protein (dbt). Phosphorylation could be implicated in the stability of per monomer and in the formation of heterodimer per-tim.

The protein resides in the nucleus. It is found in the cytoplasm. It localises to the perinuclear region. In terms of biological role, essential for biological clock functions. Determines the period length of circadian and ultradian rhythms; an increase in PER dosage leads to shortened circadian rhythms and a decrease leads to lengthened circadian rhythms. Essential for the circadian rhythmicity of locomotor activity, eclosion behavior, and for the rhythmic component of the male courtship song that originates in the thoracic nervous system. The biological cycle depends on the rhythmic formation and nuclear localization of the TIM-PER complex. Light induces the degradation of TIM, which promotes elimination of PER. Nuclear activity of the heterodimer coordinatively regulates PER and TIM transcription through a negative feedback loop. Behaves as a negative element in circadian transcriptional loop. Does not appear to bind DNA, suggesting indirect transcriptional inhibition. This is Period circadian protein (per) from Drosophila pavlovskiana (Fruit fly).